We begin with the raw amino-acid sequence, 85 residues long: Small ribosomal subunit protein bS16 (85 aa).

This sequence belongs to the bacterial ribosomal protein bS16 family.

This is Small ribosomal subunit protein bS16 from Metamycoplasma arthritidis (strain 158L3-1) (Mycoplasma arthritidis).